Here is a 180-residue protein sequence, read N- to C-terminus: Der GTPase-activating protein YihI (180 aa).

Disordered regions lie at residues 1–90 and 145–180; these read MSRK…QERR and EPEE…DYKG. A compositionally biased stretch (basic and acidic residues) spans 23–32; the sequence is NRTESDVEGR. Residues 33-43 are compositionally biased toward basic residues; sequence LRKRAKKRKGL. 2 stretches are compositionally biased toward basic and acidic residues: residues 50–68 and 80–90; these read SDAE…DPRL and PVKKQTKQERR. Over residues 165–180 the composition is skewed to acidic residues; the sequence is DLLADFDDINFDDYKG.

This sequence belongs to the YihI family. In terms of assembly, interacts with Der.

Its function is as follows. A GTPase-activating protein (GAP) that modifies Der/EngA GTPase function. May play a role in ribosome biogenesis. The sequence is that of Der GTPase-activating protein YihI from Vibrio campbellii (strain ATCC BAA-1116).